The sequence spans 328 residues: WUSCHEL-related homeobox 6 (328 aa).

Residues 1-11 (MEGSSNSPDRQ) are compositionally biased toward polar residues. The tract at residues 1–45 (MEGSSNSPDRQSSGGSPPEERGGGGSGGGGGRSAAGEPVRSRWTP) is disordered. The segment covering 23-33 (GGGSGGGGGRS) has biased composition (gly residues). Positions 38-102 (PVRSRWTPKP…NRRSRSRRRQ (65 aa)) form a DNA-binding region, homeobox; WUS-type.

The protein belongs to the WUS homeobox family.

The protein resides in the nucleus. Functionally, transcription factor which may be involved in developmental processes. This Oryza sativa subsp. japonica (Rice) protein is WUSCHEL-related homeobox 6 (WOX6).